We begin with the raw amino-acid sequence, 454 residues long: MSAFDLIVRGGTVVRGGCEVADVGVADGVISAVGPDLEGGAREEIDARGLLVLPGAIDAHVHFNEPGRTRWEGFASGTRALAAGGTTLCVEMPLNAHPPTTDGESFDLKLAAAKASAHVDFALWGGIVPGRVGRMEELAGRGVAGFKAFMSATGTPDFEAADDLTLYEGMQEAARLGLPVLVHAENRQITDALARRATSALRTTMRDYLASRPAVAELEAIGRAILLASEAGCSLHIVHVSTGRGVALVAAARERGVDVTCETCPHYLLFTDEDAVRIGAAAKCAPPLRPREEVESLWEQVLAGNVAFVTSDHSPCPPDMKAGEDMFRAWGGISGCQSLLPALLDEGYHGRGLPPERLAELLSANVARRFGFAGKGGIEEGNDADLALVDPSGEHVLREEDLHYRHPISPYVGRSFRGRVVRTILRGRTVFEGGRVVSGPAGRFVRPQREKGER.

Residues H60, H62, K147, H183, H239, and D312 each coordinate Zn(2+). Position 147 is an N6-carboxylysine (K147).

It belongs to the metallo-dependent hydrolases superfamily. Allantoinase family. As to quaternary structure, homotetramer. It depends on Zn(2+) as a cofactor. Carboxylation allows a single lysine to coordinate two zinc ions.

The catalysed reaction is (S)-allantoin + H2O = allantoate + H(+). Its pathway is nitrogen metabolism; (S)-allantoin degradation; allantoate from (S)-allantoin: step 1/1. In terms of biological role, catalyzes the conversion of allantoin (5-ureidohydantoin) to allantoic acid by hydrolytic cleavage of the five-member hydantoin ring. The polypeptide is Allantoinase (Rubrobacter xylanophilus (strain DSM 9941 / JCM 11954 / NBRC 16129 / PRD-1)).